The chain runs to 131 residues: Aspartate 1-decarboxylase (131 aa).

Ser25 acts as the Schiff-base intermediate with substrate; via pyruvic acid in catalysis. Ser25 bears the Pyruvic acid (Ser) mark. Residue Thr57 participates in substrate binding. Tyr58 (proton donor) is an active-site residue. 73 to 75 serves as a coordination point for substrate; sequence GAA.

This sequence belongs to the PanD family. In terms of assembly, heterooctamer of four alpha and four beta subunits. Pyruvate serves as cofactor. Is synthesized initially as an inactive proenzyme, which is activated by self-cleavage at a specific serine bond to produce a beta-subunit with a hydroxyl group at its C-terminus and an alpha-subunit with a pyruvoyl group at its N-terminus.

The protein localises to the cytoplasm. It catalyses the reaction L-aspartate + H(+) = beta-alanine + CO2. It participates in cofactor biosynthesis; (R)-pantothenate biosynthesis; beta-alanine from L-aspartate: step 1/1. Catalyzes the pyruvoyl-dependent decarboxylation of aspartate to produce beta-alanine. This chain is Aspartate 1-decarboxylase, found in Anaeromyxobacter sp. (strain K).